We begin with the raw amino-acid sequence, 489 residues long: Rhamnulokinase (489 aa).

ATP is bound at residue 13–17 (ASSGR). The cysteines at positions 68 and 222 are disulfide-linked. Substrate is bound by residues Gly-83 and 236 to 238 (HDT). Asp-237 serves as the catalytic Proton acceptor. Position 259 (Thr-259) interacts with ATP. Asn-296 lines the substrate pocket. Gln-304 provides a ligand contact to ATP. Cysteines 353 and 370 form a disulfide. Gly-402 contacts ATP. Cys-413 and Cys-417 are oxidised to a cystine.

This sequence belongs to the rhamnulokinase family. Mg(2+) is required as a cofactor.

The enzyme catalyses L-rhamnulose + ATP = L-rhamnulose 1-phosphate + ADP + H(+). Its pathway is carbohydrate degradation; L-rhamnose degradation; glycerone phosphate from L-rhamnose: step 2/3. Involved in the catabolism of L-rhamnose (6-deoxy-L-mannose). Catalyzes the transfer of the gamma-phosphate group from ATP to the 1-hydroxyl group of L-rhamnulose to yield L-rhamnulose 1-phosphate. The polypeptide is Rhamnulokinase (Enterobacter sp. (strain 638)).